The following is a 195-amino-acid chain: MIASIRGVIQSIGNDYLIVETGGIGFLIYAPRSTLSAAGAVGSDIFLHTILIVREDALTLYGFSDNAQRSLFEQLIGVSGVGPKLALSLLSSGTPDEVRSMIAGGDVARLARVPGIGKKTAERIVLELRGKIDFRQLAASGSTSVSALDRELSEILVSLGYSAAEAAAAIASLPSDAPPTLEERLRLALRYFGSA.

The interval 1 to 64 (MIASIRGVIQ…EDALTLYGFS (64 aa)) is domain I. Positions 65–139 (DNAQRSLFEQ…GKIDFRQLAA (75 aa)) are domain II. A flexible linker region spans residues 139-143 (ASGST). The segment at 144–195 (SVSALDRELSEILVSLGYSAAEAAAAIASLPSDAPPTLEERLRLALRYFGSA) is domain III.

This sequence belongs to the RuvA family. As to quaternary structure, homotetramer. Forms an RuvA(8)-RuvB(12)-Holliday junction (HJ) complex. HJ DNA is sandwiched between 2 RuvA tetramers; dsDNA enters through RuvA and exits via RuvB. An RuvB hexamer assembles on each DNA strand where it exits the tetramer. Each RuvB hexamer is contacted by two RuvA subunits (via domain III) on 2 adjacent RuvB subunits; this complex drives branch migration. In the full resolvosome a probable DNA-RuvA(4)-RuvB(12)-RuvC(2) complex forms which resolves the HJ.

The protein localises to the cytoplasm. The RuvA-RuvB-RuvC complex processes Holliday junction (HJ) DNA during genetic recombination and DNA repair, while the RuvA-RuvB complex plays an important role in the rescue of blocked DNA replication forks via replication fork reversal (RFR). RuvA specifically binds to HJ cruciform DNA, conferring on it an open structure. The RuvB hexamer acts as an ATP-dependent pump, pulling dsDNA into and through the RuvAB complex. HJ branch migration allows RuvC to scan DNA until it finds its consensus sequence, where it cleaves and resolves the cruciform DNA. The chain is Holliday junction branch migration complex subunit RuvA from Chloroflexus aggregans (strain MD-66 / DSM 9485).